Reading from the N-terminus, the 274-residue chain is ATP synthase subunit a (274 aa).

5 helical membrane passes run 40–60, 110–130, 149–169, 224–244, and 245–265; these read FWVC…VILI, IFVW…LVPF, DVNI…FYSI, IFIL…SVPW, and AIFH…LTIV.

The protein belongs to the ATPase A chain family. In terms of assembly, F-type ATPases have 2 components, CF(1) - the catalytic core - and CF(0) - the membrane proton channel. CF(1) has five subunits: alpha(3), beta(3), gamma(1), delta(1), epsilon(1). CF(0) has three main subunits: a(1), b(2) and c(9-12). The alpha and beta chains form an alternating ring which encloses part of the gamma chain. CF(1) is attached to CF(0) by a central stalk formed by the gamma and epsilon chains, while a peripheral stalk is formed by the delta and b chains.

The protein localises to the cell membrane. Key component of the proton channel; it plays a direct role in the translocation of protons across the membrane. This Buchnera aphidicola subsp. Baizongia pistaciae (strain Bp) protein is ATP synthase subunit a.